Here is a 219-residue protein sequence, read N- to C-terminus: Uracil-DNA glycosylase (219 aa).

Asp61 serves as the catalytic Proton acceptor.

It belongs to the uracil-DNA glycosylase (UDG) superfamily. UNG family.

The protein resides in the cytoplasm. The catalysed reaction is Hydrolyzes single-stranded DNA or mismatched double-stranded DNA and polynucleotides, releasing free uracil.. Excises uracil residues from the DNA which can arise as a result of misincorporation of dUMP residues by DNA polymerase or due to deamination of cytosine. The sequence is that of Uracil-DNA glycosylase from Haemophilus influenzae (strain 86-028NP).